We begin with the raw amino-acid sequence, 60 residues long: Potassium channel toxin alpha-KTx 29.2 (60 aa).

Positions methionine 1–alanine 28 are cleaved as a signal peptide. 3 disulfides stabilise this stretch: cysteine 32–cysteine 51, cysteine 40–cysteine 56, and cysteine 44–cysteine 58.

It belongs to the short scorpion toxin superfamily. Potassium channel inhibitor family. Alpha-KTx 29 subfamily. In terms of tissue distribution, expressed by the venom gland.

It is found in the secreted. Its function is as follows. Weakly inhibits the Kv1.3/KCNA3 channel (1 uM of thetoxin inhibits currents by 13.2%) and Kv7.1/KCNQ1 channel (10 uM of the toxin inhibits currents by 27.7%). In Lychas mucronatus (Chinese swimming scorpion), this protein is Potassium channel toxin alpha-KTx 29.2.